The chain runs to 74 residues: M-myrmeciitoxin-Mb1a (74 aa).

A signal peptide spans 1-26 (MKLSCLLLTLAIIVVLTIVHAPNVEA). Positions 27 to 50 (KALADPESDAVGFADAVGEADPNA) are excised as a propeptide. At Q73 the chain carries Glutamine amide.

Belongs to the formicidae venom precursor-01 superfamily. Ant pilosulin family. As to expression, expressed by the venom gland.

It is found in the secreted. Functionally, shows moderate activity against E.coli and S.aureus (MIC&lt;25 uM), slight activity against B.subtilis (MIC&lt;50 uM), and no activity against L.garvieae, P.aeruginosa, C.albicans, and S.cerevisiae. Has no hemolytic nor cytolytic activity. Causes an IgE-independent histamine release. The sequence is that of M-myrmeciitoxin-Mb1a from Myrmecia banksi (Jack jumper ant).